A 592-amino-acid polypeptide reads, in one-letter code: Aspartate--tRNA ligase (592 aa).

L-aspartate is bound at residue E171. The segment at 195 to 198 (QLFK) is aspartate. R217 contributes to the L-aspartate binding site. ATP is bound by residues 217–219 (RDE) and Q226. H448 contacts L-aspartate. E482 lines the ATP pocket. Position 489 (R489) interacts with L-aspartate. 534–537 (GLDR) contributes to the ATP binding site.

This sequence belongs to the class-II aminoacyl-tRNA synthetase family. Type 1 subfamily. In terms of assembly, homodimer.

The protein resides in the cytoplasm. It carries out the reaction tRNA(Asp) + L-aspartate + ATP = L-aspartyl-tRNA(Asp) + AMP + diphosphate. Catalyzes the attachment of L-aspartate to tRNA(Asp) in a two-step reaction: L-aspartate is first activated by ATP to form Asp-AMP and then transferred to the acceptor end of tRNA(Asp). The polypeptide is Aspartate--tRNA ligase (Vibrio parahaemolyticus serotype O3:K6 (strain RIMD 2210633)).